The primary structure comprises 1088 residues: Insulin receptor substrate 1-B (1088 aa).

The PH domain occupies 15–117 (DVRKVGYLRK…WYQALVDLHN (103 aa)). Residue Y48 is modified to Phosphotyrosine. In terms of domain architecture, IRS-type PTB spans 155–259 (FKEVWQVIMK…EAMKALSDEF (105 aa)). Residues 259-428 (FRPRSKSQSS…GGFISSDEYG (170 aa)) are disordered. Composition is skewed to low complexity over residues 264-278 (KSQS…ISVP), 302-312 (SATATSPAGGA), 379-400 (SPSA…GSTS), and 408-420 (SSAS…SDGG). Position 307 is a phosphoserine (S307). A Phosphotyrosine; by INSR modification is found at Y460. The short motif at 460–463 (YICM) is the YXXM motif 1 element. 2 stretches are compositionally biased toward polar residues: residues 466 to 479 (SSSH…QRYQ) and 499 to 516 (SSGT…PSQS). Disordered stretches follow at residues 466–485 (SSSH…RGEE) and 496–516 (RTHS…PSQS). 5 consecutive short sequence motifs (YXXM motif) follow at residues 521–524 (YTEM), 567–570 (YMPM), 584–587 (YMPM), 612–615 (YMMM), and 654–657 (YINM). Phosphotyrosine; by INSR occurs at positions 567 and 584. Y612 is modified (phosphotyrosine). The segment at 704-785 (NLRISANSGH…PPEPKSPGEY (82 aa)) is disordered. Residues 707 to 718 (ISANSGHNLYTE) are compositionally biased toward polar residues. Residues 719–729 (DSSSSSTSSDS) are compositionally biased toward low complexity. Phosphotyrosine; by INSR is present on residues Y785 and Y823. The tract at residues 785 to 787 (YVN) is GRB2-binding. Residues 823 to 826 (YMNM) carry the YXXM motif 7 motif. Over residues 840–863 (TSSYEPPNKPVNSVCPTETCSSSR) the composition is skewed to polar residues. The tract at residues 840–868 (TSSYEPPNKPVNSVCPTETCSSSRPPIRG) is disordered. Y875 is subject to Phosphotyrosine; by INSR. Short sequence motifs (YXXM motif) lie at residues 875 to 878 (YMSM) and 909 to 912 (YAEM). The tract at residues 935-1006 (ASRSSLLGQG…SGEDVKRHSS (72 aa)) is disordered. Composition is skewed to polar residues over residues 946 to 961 (GPSA…NRNP) and 980 to 995 (ETFS…TTGP). Residues Y1037 and Y1069 each carry the phosphotyrosine; by INSR modification.

In terms of assembly, interacts with the NPXY motif of tyrosine-phosphorylated igf1r and insr via the PTB domain. Binds to phosphatidylinositol 3-kinase p85 subunit at a low level in vitro prior to phosphorylation. Binding is greatly enhanced following tyrosine phosphorylation by insr and probably occurs via the phosphorylated YXXM motifs. In terms of processing, phosphorylation of Tyr-785 is required for grb2-binding.

Its function is as follows. May mediate the control of various cellular processes by insulin. When phosphorylated by the insulin receptor binds specifically to various cellular proteins containing SH2 domains such as phosphatidylinositol 3-kinase p85 subunit or grb2. Activates phosphatidylinositol 3-kinase when bound to the regulatory p85 subunit. In Xenopus laevis (African clawed frog), this protein is Insulin receptor substrate 1-B (irs1-b).